Here is a 708-residue protein sequence, read N- to C-terminus: Double-strand break repair protein MRE11 (708 aa).

At S2 the chain carries N-acetylserine. Position 2 is a phosphoserine (S2). D20, H22, and D60 together coordinate Mn(2+). Residues 87–117 (RPVQFEILSDQSVNFGFSKFPWVNYQDGNLN) form an interaction with NBN region. Mn(2+) is bound at residue N128. The active-site Proton donor is the H129. The Mn(2+) site is built by H217, H245, and H247. A Glycyl lysine isopeptide (Lys-Gly) (interchain with G-Cter in SUMO2) cross-link involves residue K255. At S275 the chain carries Phosphoserine. A Glycyl lysine isopeptide (Lys-Gly) (interchain with G-Cter in UFM1) cross-link involves residue K282. K339 is covalently cross-linked (Glycyl lysine isopeptide (Lys-Gly) (interchain with G-Cter in ubiquitin)). A Glycyl lysine isopeptide (Lys-Gly) (interchain with G-Cter in SUMO) cross-link involves residue K384. K416 is covalently cross-linked (Glycyl lysine isopeptide (Lys-Gly) (interchain with G-Cter in SUMO2)). K467 is covalently cross-linked (Glycyl lysine isopeptide (Lys-Gly) (interchain with G-Cter in SUMO)). K480 is covalently cross-linked (Glycyl lysine isopeptide (Lys-Gly) (interchain with G-Cter in ubiquitin)). Disordered regions lie at residues 507–540 (TRQKNTNEEDDEVREAMTRARALRSQSEESASAF) and 556–614 (NDSD…AVSA). The segment covering 569–579 (GRGRGRGRRGG) has biased composition (basic residues). R570, R572, R574, R576, R577, R580, R587, R592, and R594 each carry asymmetric dimethylarginine. The GAR motif lies at 570–594 (RGRGRGRRGGRGQNSASRGGSQRGR). Residues 599 to 614 (LETSTRSRNSKTAVSA) show a composition bias toward polar residues. Phosphoserine is present on S619. Residue K625 forms a Glycyl lysine isopeptide (Lys-Gly) (interchain with G-Cter in SUMO2) linkage. Phosphoserine is present on S641. S649 carries the phosphoserine; by PLK1 modification. Residues 651 to 708 (VEEDIFPTTSKTDQRWSSTSSSKIMSQSQVSKGVDFESSEDDDDDPFMNTSSLRRNRR) are disordered. Residues 667–681 (SSTSSSKIMSQSQVS) are compositionally biased toward low complexity. An N6-lactoyllysine modification is found at K673. S676 and S678 each carry phosphoserine; by ATM. Residues 687–696 (ESSEDDDDDP) are compositionally biased toward acidic residues. The residue at position 688 (S688) is a Phosphoserine; by CDK2. S689 and S701 each carry phosphoserine. Over residues 698-708 (MNTSSLRRNRR) the composition is skewed to polar residues.

It belongs to the MRE11/RAD32 family. Component of the MRN complex composed of two heterodimers RAD50 and MRE11 associated with a single NBN. The MRN complexes dimerize on DNA to form joined MRN-MRN oligomers required for DNA double-strand break repair. As part of the MRN complex, interacts with MCM9; the interaction recruits the complex to DNA repair sites. Component of the BASC complex, at least composed of BRCA1, MSH2, MSH6, MLH1, ATM, BLM, RAD50, MRE11 and NBN. Found in a complex with TERF2. Interacts with DCLRE1C/Artemis and DCLRE1B/Apollo. Interacts with ATF2. Interacts with EXD2. Interacts with MRNIP. Interacts with SAMHD1; leading to stimulate 3'-5' exonuclease activity. Interacts (when ubiquitinated) with UBQLN4 (via its UBA domain). Interacts with CYREN (via XLF motif). Interacts with GFI1; promoting methylation by PRMT1. Interacts with DYNLL1; inhibiting the activity of MRE11. Interacts with C1QBP and RAD50; interaction takes place in absence of DNA damage to form the MRC (MRE11-RAD50-C1QBP) complex that inhibits the activity of MRE11. Interacts with AGER/RAGE. AGER is recruited to DNA double-strand break sites where it enhances MRE11 endonuclease activity to promote DNA repair. As to quaternary structure, (Microbial infection) Interacts with herpes simplex virus 1 protein UL12. Mn(2+) is required as a cofactor. In terms of processing, phosphorylated by ATM at Ser-676 and Ser-678 in response to DNA damage, promoting MRE11 activity: phosphorylation activates MRE11 by preventing the interaction between MRE11 and the C1QBP inhibitor. Phosphorylation at Ser-649 by PLK1 primes for phosphorylation at Ser-688 by CK2, inhibiting recruitment of the MRN complex to DNA damage sites. Asymmetric dimethylation by PRMT1 promotes MRE11 exonuclease activity. Post-translationally, lactylation at Lys-673 by CREBBP/CBP in response to DNA damage promotes DNA binding and MRE11 activity. In terms of processing, acetylated on lysine residues by KAT2A /GCN5. Ubiquitinated following DNA damage. Ubiquitination triggers interaction with UBQLN4, leading to MRE11 removal from chromatin and degradation by the proteasome. Ubiquitinated at Lys-339 and Lys-480 by RNF126 via 'Lys-27'- and 'Lys-29'-linked polyubiquitin chains, promoting the exonuclease activity of MRE11. Post-translationally, SUMOylated by PIAS1, stabilizing MRE11 on chromatin during end resection. DeSUMOylated by SENP3 following removal from DNA double-strand breaks (DSBs). In terms of processing, ufmylation at Lys-282 promotes MRE11 activity and is required for activation of the ATM and ATR kinases by the MRN complex. (Microbial infection) Following infection by adenovirus E4, ubiquitinated and degraded by a SCF-like E3 ubiquitin ligase complex containing viral proteins E1B-55K and E4-ORF6.

Its subcellular location is the nucleus. The protein localises to the chromosome. The protein resides in the telomere. Its activity is regulated as follows. Interaction with SAMHD1 stimulates the double-strand-specific 3'-5' exonuclease activity. RBBP8/CtIP specifically promotes the endonuclease activity to clear protein-DNA adducts and generate clean double-strand break ends. DYNLL1-binding inhibits the activity of MRE11. MRE11 activity is inhibited by C1QBP: in absence of DNA damage, C1QBP interacts with unphosphorylated MRE11, preventing formation and activity of the MRN complex. The mirin-derivative PFM39, specifically inhibits the 3'-5' exonuclease activity. The N-alkylated mirin-derivatives PFM03 and PFM01 specifically inhibit the endonuclease activity. Functionally, core component of the MRN complex, which plays a central role in double-strand break (DSB) repair, DNA recombination, maintenance of telomere integrity and meiosis. The MRN complex is involved in the repair of DNA double-strand breaks (DSBs) via homologous recombination (HR), an error-free mechanism which primarily occurs during S and G2 phases. The complex (1) mediates the end resection of damaged DNA, which generates proper single-stranded DNA, a key initial steps in HR, and is (2) required for the recruitment of other repair factors and efficient activation of ATM and ATR upon DNA damage. Within the MRN complex, MRE11 possesses both single-strand endonuclease activity and double-strand-specific 3'-5' exonuclease activity. After DSBs, MRE11 is loaded onto DSBs sites and cleaves DNA by cooperating with RBBP8/CtIP to initiate end resection. MRE11 first endonucleolytically cleaves the 5' strand at DNA DSB ends to prevent non-homologous end joining (NHEJ) and licence HR. It then generates a single-stranded DNA gap via 3' to 5' exonucleolytic degradation to create entry sites for EXO1- and DNA2-mediated 5' to 3' long-range resection, which is required for single-strand invasion and recombination. RBBP8/CtIP specifically promotes the endonuclease activity of MRE11 to clear protein-DNA adducts and generate clean double-strand break ends. MRE11 endonuclease activity is also enhanced by AGER/RAGE. The MRN complex is also required for DNA damage signaling via activation of the ATM and ATR kinases: the nuclease activity of MRE11 is not required to activate ATM and ATR. The MRN complex is also required for the processing of R-loops. The MRN complex is involved in the activation of the cGAS-STING pathway induced by DNA damage during tumorigenesis: the MRN complex acts by displacing CGAS from nucleosome sequestration, thereby activating it. In telomeres the MRN complex may modulate t-loop formation. MRE11 contains two DNA-binding domains (DBDs), enabling it to bind both single-stranded DNA (ssDNA) and double-stranded DNA (dsDNA). In Homo sapiens (Human), this protein is Double-strand break repair protein MRE11.